Reading from the N-terminus, the 549-residue chain is Cytoplasmic trehalase (549 aa).

Residues Arg-168, Trp-175–Asp-176, Asn-212, Arg-221–Gln-223, Arg-292–Glu-294, and Gly-324 each bind substrate. Active-site proton donor/acceptor residues include Asp-326 and Glu-509. Substrate is bound at residue Glu-525.

The protein belongs to the glycosyl hydrolase 37 family. Monomer.

Its subcellular location is the cytoplasm. It catalyses the reaction alpha,alpha-trehalose + H2O = alpha-D-glucose + beta-D-glucose. It participates in glycan degradation; trehalose degradation; D-glucose from alpha,alpha-trehalose: step 1/1. Its function is as follows. Hydrolyzes trehalose to glucose. Could be involved, in cells returning to low osmolarity conditions, in the utilization of the accumulated cytoplasmic trehalose, which was synthesized in response to high osmolarity. In Shigella flexneri serotype 5b (strain 8401), this protein is Cytoplasmic trehalase.